Reading from the N-terminus, the 272-residue chain is Putative phosphoenolpyruvate synthase regulatory protein (272 aa).

G152–T159 serves as a coordination point for ADP.

Belongs to the pyruvate, phosphate/water dikinase regulatory protein family. PSRP subfamily.

It carries out the reaction [pyruvate, water dikinase] + ADP = [pyruvate, water dikinase]-phosphate + AMP + H(+). It catalyses the reaction [pyruvate, water dikinase]-phosphate + phosphate + H(+) = [pyruvate, water dikinase] + diphosphate. In terms of biological role, bifunctional serine/threonine kinase and phosphorylase involved in the regulation of the phosphoenolpyruvate synthase (PEPS) by catalyzing its phosphorylation/dephosphorylation. In Pseudomonas putida (strain ATCC 700007 / DSM 6899 / JCM 31910 / BCRC 17059 / LMG 24140 / F1), this protein is Putative phosphoenolpyruvate synthase regulatory protein.